Consider the following 80-residue polypeptide: Large ribosomal subunit protein bL31B (80 aa).

The protein belongs to the bacterial ribosomal protein bL31 family. Type B subfamily. Part of the 50S ribosomal subunit.

The sequence is that of Large ribosomal subunit protein bL31B from Shouchella clausii (strain KSM-K16) (Alkalihalobacillus clausii).